We begin with the raw amino-acid sequence, 98 residues long: NADH-ubiquinone oxidoreductase chain 4L (98 aa).

3 helical membrane passes run Met-1–Met-21, Ala-29–Leu-49, and Ile-61–Val-81.

The protein belongs to the complex I subunit 4L family. In terms of assembly, core subunit of respiratory chain NADH dehydrogenase (Complex I) which is composed of 45 different subunits.

It localises to the mitochondrion inner membrane. It catalyses the reaction a ubiquinone + NADH + 5 H(+)(in) = a ubiquinol + NAD(+) + 4 H(+)(out). Functionally, core subunit of the mitochondrial membrane respiratory chain NADH dehydrogenase (Complex I) which catalyzes electron transfer from NADH through the respiratory chain, using ubiquinone as an electron acceptor. Part of the enzyme membrane arm which is embedded in the lipid bilayer and involved in proton translocation. In Balaenoptera borealis (Sei whale), this protein is NADH-ubiquinone oxidoreductase chain 4L (MT-ND4L).